The primary structure comprises 82 residues: Sec-independent protein translocase protein TatA (82 aa).

Residues 1–21 traverse the membrane as a helical segment; that stretch reads MGSFSIWHWLIVLLVVVMIFG. The interval 39–82 is disordered; sequence FKDGMKDGSTTDAPAASSAPAAQVTGQPANSDKSTIDVEARQKS. Positions 51-60 are enriched in low complexity; the sequence is APAASSAPAA. Residues 62–71 show a composition bias toward polar residues; that stretch reads VTGQPANSDK. Basic and acidic residues predominate over residues 72-82; it reads STIDVEARQKS.

This sequence belongs to the TatA/E family. In terms of assembly, the Tat system comprises two distinct complexes: a TatABC complex, containing multiple copies of TatA, TatB and TatC subunits, and a separate TatA complex, containing only TatA subunits. Substrates initially bind to the TatABC complex, which probably triggers association of the separate TatA complex to form the active translocon.

Its subcellular location is the cell inner membrane. Functionally, part of the twin-arginine translocation (Tat) system that transports large folded proteins containing a characteristic twin-arginine motif in their signal peptide across membranes. TatA could form the protein-conducting channel of the Tat system. This chain is Sec-independent protein translocase protein TatA, found in Variovorax paradoxus (strain S110).